Consider the following 246-residue polypeptide: Probable transcriptional regulatory protein GWCH70_2524 (246 aa).

Belongs to the TACO1 family.

Its subcellular location is the cytoplasm. This Geobacillus sp. (strain WCH70) protein is Probable transcriptional regulatory protein GWCH70_2524.